The sequence spans 1990 residues: Protein TANC2 (1990 aa).

2 disordered regions span residues M1 to E85 and S129 to T149. 4 positions are modified to phosphoserine: S169, S238, S294, and S400. Residues I396 to E442 form a disordered region. A compositionally biased stretch (polar residues) spans P419–C431. ANK repeat units follow at residues E846–Y878, N884–A913, S917–H946, N950–G979, A990–E1019, W1033–Q1062, R1066–M1095, Q1099–L1128, E1132–H1161, N1165–H1194, and S1198–P1227. TPR repeat units follow at residues L1244–E1277, V1291–S1324, and Y1325–N1358. Disordered stretches follow at residues C1372–H1401, E1430–Q1586, and L1692–G1718. A phosphoserine mark is found at S1442 and S1458. The segment covering R1469 to Y1498 has biased composition (polar residues). Residues S1530 and S1545 each carry the phosphoserine modification. Residues V1553 to Q1572 are compositionally biased toward polar residues. Asymmetric dimethylarginine is present on residues R1563 and R1576. S1579 carries the phosphoserine modification. S1722 bears the Phosphoserine mark. Positions S1783–T1798 are enriched in low complexity. Disordered stretches follow at residues S1783–S1803 and D1821–T1843. Phosphoserine occurs at positions 1824 and 1827. The N-linked (GlcNAc...) asparagine glycan is linked to N1928. The segment at S1968–V1990 is disordered.

This sequence belongs to the TANC family. Interacts with KIF1A; the interaction decreases in presence of calcium.

The protein localises to the cell projection. The protein resides in the dendritic spine. Functionally, scaffolding protein in the dendritic spines which acts as immobile postsynaptic posts able to recruit KIF1A-driven dense core vesicles to dendritic spines. This is Protein TANC2 (TANC2) from Homo sapiens (Human).